A 79-amino-acid chain; its full sequence is Acyl carrier protein (79 aa).

Residues 2 to 77 (SDIEARVKKI…NAVDYATKNQ (76 aa)) form the Carrier domain. S37 is subject to O-(pantetheine 4'-phosphoryl)serine.

The protein belongs to the acyl carrier protein (ACP) family. Post-translationally, 4'-phosphopantetheine is transferred from CoA to a specific serine of apo-ACP by AcpS. This modification is essential for activity because fatty acids are bound in thioester linkage to the sulfhydryl of the prosthetic group.

The protein localises to the cytoplasm. The protein operates within lipid metabolism; fatty acid biosynthesis. Its function is as follows. Carrier of the growing fatty acid chain in fatty acid biosynthesis. This is Acyl carrier protein from Variovorax paradoxus (strain S110).